Here is a 374-residue protein sequence, read N- to C-terminus: Methylthioribose-1-phosphate isomerase (374 aa).

Asp251 (proton donor) is an active-site residue.

It belongs to the eIF-2B alpha/beta/delta subunits family. MtnA subfamily.

The protein resides in the cytoplasm. It localises to the nucleus. It carries out the reaction 5-(methylsulfanyl)-alpha-D-ribose 1-phosphate = 5-(methylsulfanyl)-D-ribulose 1-phosphate. Its pathway is amino-acid biosynthesis; L-methionine biosynthesis via salvage pathway; L-methionine from S-methyl-5-thio-alpha-D-ribose 1-phosphate: step 1/6. Catalyzes the interconversion of methylthioribose-1-phosphate (MTR-1-P) into methylthioribulose-1-phosphate (MTRu-1-P). This chain is Methylthioribose-1-phosphate isomerase, found in Oryza sativa subsp. indica (Rice).